A 1367-amino-acid polypeptide reads, in one-letter code: Probable serine/threonine-protein kinase pkgA (1367 aa).

Disordered regions lie at residues 140–164, 264–429, 456–556, and 771–792; these read IDENNNNNNNNNNNNNNNNNKNKTI, KNGK…LLSR, PTPL…SRKP, and PREEELSQTPLGGRLRSDSDPV. Low complexity predominate over residues 143–162; it reads NNNNNNNNNNNNNNNNNKNK. Over residues 271–282 the composition is skewed to pro residues; it reads IKRPSPPLPPPQ. Positions 287–326 are enriched in basic and acidic residues; that stretch reads EQQKEQKEQQKEQQKEQQKEQQKEQEQKQQEPQKYVKFEI. Positions 340–381 are enriched in low complexity; sequence ISSSNISNEISKQQQQQQQQQQQQQQQQQQQQQQQQQQQQQQ. Residues 399-421 show a composition bias toward polar residues; it reads ANNNILTTPLSSQPTQSLETPST. Positions 506 to 517 are enriched in acidic residues; sequence GEDEEEDEDDDN. Positions 531–544 are enriched in basic residues; the sequence is LKNKRPFKKTHVHH. Residues 810 to 1236 form the Protein kinase domain; that stretch reads FEFIKPITKG…AEEIKSHPFF (427 aa). Residues 816–824 and lysine 839 contribute to the ATP site; that span reads ITKGGYGKV. Aspartate 933 acts as the Proton acceptor in catalysis. Disordered stretches follow at residues 971–1034, 1084–1134, and 1288–1312; these read FSPT…PSNT, FIPP…HNIH, and QNQNKESSTILTTSPPSTSSTTATA. Positions 979-1015 are enriched in low complexity; the sequence is NNQSSSSSSVSNIGGSNTIGSNISSTNNNNNNNNTTG. Polar residues predominate over residues 1025-1034; that stretch reads NTETPIPSNT. 2 stretches are compositionally biased toward low complexity: residues 1092–1125 and 1294–1312; these read QQPISNIPTTTTTTTTTTTGQQSQQQSQQQQQTT and SSTILTTSPPSTSSTTATA. The 111-residue stretch at 1237–1347 folds into the AGC-kinase C-terminal domain; the sequence is KSINWKTILT…VNFQSLLELN (111 aa).

Belongs to the protein kinase superfamily. AGC Ser/Thr protein kinase family.

The enzyme catalyses L-seryl-[protein] + ATP = O-phospho-L-seryl-[protein] + ADP + H(+). It catalyses the reaction L-threonyl-[protein] + ATP = O-phospho-L-threonyl-[protein] + ADP + H(+). This Dictyostelium discoideum (Social amoeba) protein is Probable serine/threonine-protein kinase pkgA (pkgA).